A 157-amino-acid polypeptide reads, in one-letter code: Putative pre-16S rRNA nuclease (157 aa).

The protein belongs to the YqgF nuclease family.

The protein localises to the cytoplasm. Its function is as follows. Could be a nuclease involved in processing of the 5'-end of pre-16S rRNA. The polypeptide is Putative pre-16S rRNA nuclease (Ruegeria sp. (strain TM1040) (Silicibacter sp.)).